The sequence spans 303 residues: Zinc transporter ZIP9-A (303 aa).

The helical transmembrane segment at 7-27 threads the bilayer; the sequence is ISLLSLAMLVGCYVSGIIPLA. Residue N29 is glycosylated (N-linked (GlcNAc...) asparagine). 5 helical membrane-spanning segments follow: residues 35-55, 102-122, 142-162, 172-192, and 206-226; these read LKLVTVLGAGLLCGTALAVII, AYIGVSLVLGFVFMLLVDQIG, ITTTLGLVVHAAADGVALGAA, LIVFVAIMLHKAPAAFGLVSF, and HLLVFALAAPVLSMLTYLGLS. The N-linked (GlcNAc...) asparagine glycan is linked to N237. 2 helical membrane passes run 240–260 and 282–302; these read GVAMLFSAGTFLYVATVHVLP and LEVCALVLGCLIPLVLSIGHQ.

The protein belongs to the ZIP transporter (TC 2.A.5) family.

The protein localises to the golgi apparatus. It is found in the trans-Golgi network membrane. The protein resides in the cell membrane. It localises to the cytoplasm. Its subcellular location is the perinuclear region. The protein localises to the mitochondrion. It is found in the nucleus. The enzyme catalyses Zn(2+)(in) = Zn(2+)(out). Its function is as follows. Transports zinc ions across cell and organelle membranes into the cytoplasm and regulates intracellular zinc homeostasis. Participates in the zinc ions efflux out of the secretory compartments. Regulates intracellular zinc level, resulting in the enhancement of AKT1 and MAPK3/MAPK1 (Erk1/2) phosphorylation in response to the BCR activation. Also functions as a membrane androgen receptor that mediates, through a G protein, the non-classical androgen signaling pathway, characterized by the activation of MAPK3/MAPK1 (Erk1/2) and transcription factors CREB1 or ATF1. Moreover, has dual functions as a membrane-bound androgen receptor and as an androgen-dependent zinc transporter both of which are mediated through an inhibitory G protein (Gi) that mediates both MAP kinase and zinc signaling leading to the androgen-dependent apoptotic process. The polypeptide is Zinc transporter ZIP9-A (slc39a9-a) (Xenopus laevis (African clawed frog)).